Consider the following 276-residue polypeptide: 5'-nucleotidase SurE (276 aa).

4 residues coordinate a divalent metal cation: Asp14, Asp15, Ser46, and Asn104.

The protein belongs to the SurE nucleotidase family. A divalent metal cation serves as cofactor.

Its subcellular location is the cytoplasm. The enzyme catalyses a ribonucleoside 5'-phosphate + H2O = a ribonucleoside + phosphate. Nucleotidase that shows phosphatase activity on nucleoside 5'-monophosphates. The chain is 5'-nucleotidase SurE from Crocosphaera subtropica (strain ATCC 51142 / BH68) (Cyanothece sp. (strain ATCC 51142)).